A 312-amino-acid chain; its full sequence is Olfactory receptor 8H3 (312 aa).

At 1 to 26 the chain is on the extracellular side; that stretch reads MMGRRNDTNVADFILTGLSDSEEVQM. Asn6 is a glycosylation site (N-linked (GlcNAc...) asparagine). A helical transmembrane segment spans residues 27-47; that stretch reads ALFMLFLLIYLITMLGNVGML. Topologically, residues 48-55 are cytoplasmic; it reads LIIRLDLQ. Residues 56–76 traverse the membrane as a helical segment; sequence LHTPMYFFLTHLSFIDLSYST. At 77–99 the chain is on the extracellular side; that stretch reads VVTPKTLANLLTSNYISFTGCFA. Cys97 and Cys189 form a disulfide bridge. The helical transmembrane segment at 100 to 120 threads the bilayer; sequence QMFCFVFLGTAECYLLSSMAY. Over 121–139 the chain is Cytoplasmic; sequence DRYAAICSPLHYTVIMPKR. Residues 140-160 traverse the membrane as a helical segment; sequence LCLALITGPYVIGFMDSFVNV. Residues 161–197 are Extracellular-facing; that stretch reads VSMSRLHFCDSNIIHHFFCDTSPILALSCTDTDNTEM. The chain crosses the membrane as a helical span at residues 198–217; it reads LIFIIAGSTLMVSLITISAS. Over 218 to 237 the chain is Cytoplasmic; the sequence is YVSILSTILKINSTSGKQKA. The helical transmembrane segment at 238-258 threads the bilayer; that stretch reads FSTCVSHLLGVTIFYGTMIFT. Residues 259–271 are Extracellular-facing; that stretch reads YLKPRKSYSLGRD. Residues 272-292 form a helical membrane-spanning segment; it reads QVAPVFYTIVIPMLNPLIYSL. Topologically, residues 293 to 312 are cytoplasmic; it reads RNREVKNALIRVMQRRQDSR.

Belongs to the G-protein coupled receptor 1 family.

The protein localises to the cell membrane. Functionally, odorant receptor. The chain is Olfactory receptor 8H3 (OR8H3) from Homo sapiens (Human).